A 390-amino-acid polypeptide reads, in one-letter code: Probable tRNA pseudouridine synthase D 2 (390 aa).

The Nucleophile role is filled by aspartate 93. One can recognise a TRUD domain in the interval 166–353 (YVLNYYGIQR…YGTRRKMVTP (188 aa)).

The protein belongs to the pseudouridine synthase TruD family.

It catalyses the reaction uridine(13) in tRNA = pseudouridine(13) in tRNA. Functionally, could be responsible for synthesis of pseudouridine from uracil-13 in transfer RNAs. The protein is Probable tRNA pseudouridine synthase D 2 of Methanococcus maripaludis (strain DSM 14266 / JCM 13030 / NBRC 101832 / S2 / LL).